A 1563-amino-acid polypeptide reads, in one-letter code: DNA-directed RNA polymerase subunit beta' (1563 aa).

Positions 61, 63, 76, and 79 each coordinate Zn(2+). Residues Asp-588, Asp-590, and Asp-592 each contribute to the Mg(2+) site. Residues Cys-925, Cys-999, Cys-1006, and Cys-1009 each coordinate Zn(2+).

This sequence belongs to the RNA polymerase beta' chain family. The RNAP catalytic core consists of 2 alpha, 1 beta, 1 beta' and 1 omega subunit. When a sigma factor is associated with the core the holoenzyme is formed, which can initiate transcription. Mg(2+) serves as cofactor. Requires Zn(2+) as cofactor.

It carries out the reaction RNA(n) + a ribonucleoside 5'-triphosphate = RNA(n+1) + diphosphate. Its function is as follows. DNA-dependent RNA polymerase catalyzes the transcription of DNA into RNA using the four ribonucleoside triphosphates as substrates. This chain is DNA-directed RNA polymerase subunit beta', found in Hydrogenobaculum sp. (strain Y04AAS1).